Consider the following 950-residue polypeptide: Protein translocase subunit SecA (950 aa).

Residues Gln87, Gly105–Thr109, and Asp524 contribute to the ATP site. Positions Gly908–Glu932 are disordered. Residues Cys934, Cys936, Cys945, and His946 each coordinate Zn(2+).

It belongs to the SecA family. As to quaternary structure, monomer and homodimer. Part of the essential Sec protein translocation apparatus which comprises SecA, SecYEG and auxiliary proteins SecDF-YajC and YidC. Requires Zn(2+) as cofactor.

Its subcellular location is the cell inner membrane. The protein localises to the cytoplasm. The catalysed reaction is ATP + H2O + cellular proteinSide 1 = ADP + phosphate + cellular proteinSide 2.. Part of the Sec protein translocase complex. Interacts with the SecYEG preprotein conducting channel. Has a central role in coupling the hydrolysis of ATP to the transfer of proteins into and across the cell membrane, serving both as a receptor for the preprotein-SecB complex and as an ATP-driven molecular motor driving the stepwise translocation of polypeptide chains across the membrane. In Bradyrhizobium sp. (strain BTAi1 / ATCC BAA-1182), this protein is Protein translocase subunit SecA.